We begin with the raw amino-acid sequence, 464 residues long: 3-isopropylmalate dehydratase large subunit (464 aa).

3 residues coordinate [4Fe-4S] cluster: C337, C397, and C400.

It belongs to the aconitase/IPM isomerase family. LeuC type 1 subfamily. Heterodimer of LeuC and LeuD. Requires [4Fe-4S] cluster as cofactor.

It catalyses the reaction (2R,3S)-3-isopropylmalate = (2S)-2-isopropylmalate. It participates in amino-acid biosynthesis; L-leucine biosynthesis; L-leucine from 3-methyl-2-oxobutanoate: step 2/4. Its function is as follows. Catalyzes the isomerization between 2-isopropylmalate and 3-isopropylmalate, via the formation of 2-isopropylmaleate. This Bacillus cereus (strain AH187) protein is 3-isopropylmalate dehydratase large subunit.